Here is a 210-residue protein sequence, read N- to C-terminus: Na(+)-translocating NADH-quinone reductase subunit D (210 aa).

The next 6 membrane-spanning stretches (helical) occupy residues Pro14 to Val34, Leu42 to Ile62, Ile72 to Ala92, Val103 to Met123, Phe131 to Val151, and Asn178 to Ile198.

The protein belongs to the NqrDE/RnfAE family. Composed of six subunits; NqrA, NqrB, NqrC, NqrD, NqrE and NqrF.

The protein resides in the cell inner membrane. It carries out the reaction a ubiquinone + n Na(+)(in) + NADH + H(+) = a ubiquinol + n Na(+)(out) + NAD(+). In terms of biological role, NQR complex catalyzes the reduction of ubiquinone-1 to ubiquinol by two successive reactions, coupled with the transport of Na(+) ions from the cytoplasm to the periplasm. NqrA to NqrE are probably involved in the second step, the conversion of ubisemiquinone to ubiquinol. In Shewanella putrefaciens (strain CN-32 / ATCC BAA-453), this protein is Na(+)-translocating NADH-quinone reductase subunit D.